The following is a 185-amino-acid chain: Ribosome maturation factor RimP (185 aa).

The disordered stretch occupies residues 162–185 (VRLERAADGAPERGGDRGDTEESR).

Belongs to the RimP family.

It localises to the cytoplasm. In terms of biological role, required for maturation of 30S ribosomal subunits. This Saccharopolyspora erythraea (strain ATCC 11635 / DSM 40517 / JCM 4748 / NBRC 13426 / NCIMB 8594 / NRRL 2338) protein is Ribosome maturation factor RimP.